Reading from the N-terminus, the 537-residue chain is Phosphoenolpyruvate carboxykinase (ATP) (537 aa).

3 residues coordinate substrate: R61, Y195, and K201. Residues K201, H220, and 236-244 (GLSGTGKTT) each bind ATP. Positions 201 and 220 each coordinate Mn(2+). D257 lines the Mn(2+) pocket. ATP is bound at residue E285. Residues 312–321 (DFNDGSKTEN) show a composition bias toward basic and acidic residues. The interval 312-339 (DFNDGSKTENTRSAYPLESIPNASPTGR) is disordered. Residue R323 participates in substrate binding. R323 and T448 together coordinate ATP.

Belongs to the phosphoenolpyruvate carboxykinase (ATP) family. Mn(2+) serves as cofactor.

It localises to the cytoplasm. It carries out the reaction oxaloacetate + ATP = phosphoenolpyruvate + ADP + CO2. It functions in the pathway carbohydrate biosynthesis; gluconeogenesis. Its function is as follows. Involved in the gluconeogenesis. Catalyzes the conversion of oxaloacetate (OAA) to phosphoenolpyruvate (PEP) through direct phosphoryl transfer between the nucleoside triphosphate and OAA. This is Phosphoenolpyruvate carboxykinase (ATP) from Rhodopseudomonas palustris (strain BisB18).